The chain runs to 123 residues: Large ribosomal subunit protein uL14 (123 aa).

It belongs to the universal ribosomal protein uL14 family. In terms of assembly, part of the 50S ribosomal subunit. Forms a cluster with proteins L3 and L19. In the 70S ribosome, L14 and L19 interact and together make contacts with the 16S rRNA in bridges B5 and B8.

Functionally, binds to 23S rRNA. Forms part of two intersubunit bridges in the 70S ribosome. In Corynebacterium urealyticum (strain ATCC 43042 / DSM 7109), this protein is Large ribosomal subunit protein uL14.